The sequence spans 511 residues: Lysine--tRNA ligase (511 aa).

Mg(2+)-binding residues include glutamate 422 and glutamate 429.

Belongs to the class-II aminoacyl-tRNA synthetase family. In terms of assembly, homodimer. Requires Mg(2+) as cofactor.

The protein resides in the cytoplasm. The catalysed reaction is tRNA(Lys) + L-lysine + ATP = L-lysyl-tRNA(Lys) + AMP + diphosphate. The sequence is that of Lysine--tRNA ligase from Chlorobaculum tepidum (strain ATCC 49652 / DSM 12025 / NBRC 103806 / TLS) (Chlorobium tepidum).